The chain runs to 217 residues: Outer-membrane lipoprotein LolB (217 aa).

The signal sequence occupies residues 1–20; it reads MSRAVRTLALGGLVLVGLSA. Residue C21 is the site of N-palmitoyl cysteine attachment. A lipid anchor (S-diacylglycerol cysteine) is attached at C21.

The protein belongs to the LolB family. In terms of assembly, monomer.

Its subcellular location is the cell outer membrane. Plays a critical role in the incorporation of lipoproteins in the outer membrane after they are released by the LolA protein. The polypeptide is Outer-membrane lipoprotein LolB (Xanthomonas euvesicatoria pv. vesicatoria (strain 85-10) (Xanthomonas campestris pv. vesicatoria)).